The sequence spans 690 residues: Crooked neck-like protein 1 (690 aa).

HAT repeat units lie at residues 61 to 93 (DYKLRKRKTFEDNIRKNRTVISNWIKYAQWEES), 95 to 127 (KEIQRARSIYERALDVDYRNITLWLKYAEMEMK), 129 to 161 (RQVNHARNIWDRAITTLPRVNQFWYKYTYMEEM), 163 to 194 (GNVAGARQVFERWMEWQPEEQAWHSYINFELR), 196 to 227 (KEVERARTIYERFVLVHPAVKNWIKYARFEEK), 229 to 264 (AYFAHARKVYERAVEFFGDEHMDEHLYVAFAKFEEN), 266 to 300 (KEFERVRVIYKYALDRISKQEAQELFKNYTIFEKK), 310 to 342 (IIVSKRRFQYEEEVKANPHNYDAWFDYLRLVES), 344 to 378 (AEADTVREVYERAIANVPPIQEKRHWKRYIYLWVN), 388 to 424 (KDPERTRQVYQASLELIPHKKFTFAKMWLYYAQFEIR), 459 to 491 (REFDRCRKLYEKFLEFGPENCTSWIKFAELETI), 493 to 527 (GDIERARAIYELAISQPRLDMPEVLWKSYIDFEIE), 529 to 560 (EETERTRNLYRQLLQRTQHVKVWISFAQFELS), 565 to 606 (GSVA…EFGT), 608 to 646 (SDKERVDKLMPEKVKKRRKVQADDGSDAGWEEYYDYIFP), and 648 to 673 (DAANQPNLKLLAMAKLWKKQQQEREA). The interval 250–467 (MDEHLYVAFA…LREFDRCRKL (218 aa)) is mediates interaction with HSP90. Position 342 is a phosphoserine (Ser-342). A Nuclear localization signal motif is present at residues 618–626 (PEKVKKRRK). Residues 667 to 679 (QQQEREAAEQDPD) are compositionally biased toward basic and acidic residues. The segment at 667-690 (QQQEREAAEQDPDKDIDESESSSF) is disordered. Positions 680–690 (KDIDESESSSF) are enriched in acidic residues. Ser-689 is modified (phosphoserine).

The protein belongs to the crooked-neck family. Identified in the spliceosome C complex. Present in a spliceosome complex assembled in vitro containing CRNKL1, HPRP8BP and SNRPB2. Component of the minor spliceosome, which splices U12-type introns. Interacts with PPIL2 (via the PPIase cyclophilin-type domain); they may form a trimeric complex with HSP90.

It is found in the nucleus. The protein resides in the nucleus speckle. In terms of biological role, involved in pre-mRNA splicing process. As a component of the minor spliceosome, involved in the splicing of U12-type introns in pre-mRNAs. The sequence is that of Crooked neck-like protein 1 (Crnkl1) from Mus musculus (Mouse).